We begin with the raw amino-acid sequence, 562 residues long: Gut esterase 1 (562 aa).

The first 16 residues, 1–16 (MRIFLVSVILINACWA), serve as a signal peptide directing secretion. N-linked (GlcNAc...) asparagine; atypical glycosylation occurs at N73. A disulfide bridge links C75 with C93. S198 serves as the catalytic Acyl-ester intermediate. The cysteines at positions 250 and 258 are disulfide-linked. Active-site charge relay system residues include E319 and H452. Positions 559-562 (KDEL) match the Prevents secretion from ER motif.

It belongs to the type-B carboxylesterase/lipase family. Expressed only in the intestine.

Its subcellular location is the endoplasmic reticulum lumen. It catalyses the reaction a carboxylic ester + H2O = an alcohol + a carboxylate + H(+). The sequence is that of Gut esterase 1 (ges-1) from Caenorhabditis elegans.